An 891-amino-acid chain; its full sequence is Iron-regulated surface determinant protein H (891 aa).

The N-terminal stretch at 1 to 40 (MNKHHPKLRSFYSIRKSTLGVASVIVSTLFLITSQHQAQA) is a signal peptide. Positions 42–77 (ENTNTSDKISENQNNNATTTQQPKDTNQTQPATQPV) are disordered. The segment covering 53–63 (NQNNNATTTQQ) has biased composition (low complexity). A compositionally biased stretch (polar residues) spans 64–77 (PKDTNQTQPATQPV). The NEAT 1 domain maps to 105 to 232 (DIGPREQVNF…IYNDPSLVKS (128 aa)). Residues 239–324 (VTNDQSSSDA…NQSDVNQQYP (86 aa)) are disordered. Residues 240–276 (TNDQSSSDASNQTNTNTSNQNTSTTNNANNQPQATTN) are compositionally biased toward low complexity. Positions 277–323 (MSQPAQPKSSANADQASSQPAHETNSNGNTNDKTNESSNQSDVNQQY) are enriched in polar residues. NEAT domains follow at residues 345–471 (TADN…DYVD) and 543–660 (QLTD…TKDD). Disordered stretches follow at residues 657 to 718 (TKDD…DADN), 752 to 777 (IAKD…KDSN), and 835 to 864 (TVKT…GETT). 2 stretches are compositionally biased toward polar residues: residues 663–677 (SQNN…QTGQ) and 687–697 (AENSSTATNPK). The segment covering 698 to 718 (DASDKADVIEPESDVVKDADN) has biased composition (basic and acidic residues). Basic and acidic residues predominate over residues 835-850 (TVKTKEKAGTPSKENK). A compositionally biased stretch (polar residues) spans 851–864 (LSQSKMLPKTGETT). Positions 857 to 861 (LPKTG) match the LPXTG sorting signal motif. A Pentaglycyl murein peptidoglycan amidated threonine modification is found at Thr-860. The propeptide at 861–891 (GETTSSQSWWGLYALLGMLALFIPKFRKESK) is removed by sortase.

This sequence belongs to the IsdH family.

The protein localises to the secreted. It is found in the cell wall. Functionally, binds human plasma haptoglobin-hemoglobin complexes, haptoglobin and hemoglobin. Binds haptoglobin-hemoglobin complexes with significantly higher affinity than haptoglobin alone. The protein is Iron-regulated surface determinant protein H (isdH) of Staphylococcus aureus (strain N315).